The following is a 773-amino-acid chain: Membrane-bound aldehyde dehydrogenase [pyrroloquinoline-quinone] (773 aa).

The segment at residues Met1–Ala44 is a signal peptide (tat-type signal).

It depends on pyrroloquinoline quinone as a cofactor. In terms of processing, predicted to be exported by the Tat system. The position of the signal peptide cleavage has been experimentally proven.

Its subcellular location is the cell inner membrane. It catalyses the reaction an aldehyde + a quinone + H2O = a quinol + a carboxylate + H(+). The polypeptide is Membrane-bound aldehyde dehydrogenase [pyrroloquinoline-quinone] (Gluconacetobacter polyoxogenes (Acetobacter polyoxogenes)).